Reading from the N-terminus, the 168-residue chain is Thermonuclease (168 aa).

An N-terminal signal peptide occupies residues 1–27 (MKKITTGVLILAIAIVVLIFQYINGDG). Catalysis depends on residues R64, E72, and R114.

The protein belongs to the thermonuclease family. It depends on Ca(2+) as a cofactor.

It localises to the secreted. It catalyses the reaction Endonucleolytic cleavage to nucleoside 3'-phosphates and 3'-phosphooligonucleotide end-products.. Enzyme that catalyzes the hydrolysis of both DNA and RNA at the 5'-position of the phosphodiester bond. In Staphylococcus intermedius, this protein is Thermonuclease (nucI).